The following is a 164-amino-acid chain: Ubiquitin-fold modifier-conjugating enzyme 1 (164 aa).

The Glycyl thioester intermediate role is filled by Cys-116.

The protein belongs to the ubiquitin-conjugating enzyme family. UFC1 subfamily.

E2-like enzyme which forms an intermediate with UFM1 via a thioester linkage. This Drosophila erecta (Fruit fly) protein is Ubiquitin-fold modifier-conjugating enzyme 1.